The sequence spans 228 residues: Potassium/proton antiporter CemA (228 aa).

3 helical membrane passes run 6–26, 113–133, and 188–208; these read FIPLLYLTSIVFLPWWVSFSF, IICFVILSGYSFLVNEELFIL, and IISGLVSTFPVIFDTIFKYWI.

This sequence belongs to the CemA family.

It localises to the plastid. The protein resides in the chloroplast inner membrane. The catalysed reaction is K(+)(in) + H(+)(out) = K(+)(out) + H(+)(in). Contributes to K(+)/H(+) antiport activity by supporting proton efflux to control proton extrusion and homeostasis in chloroplasts in a light-dependent manner to modulate photosynthesis. Prevents excessive induction of non-photochemical quenching (NPQ) under continuous-light conditions. Indirectly promotes efficient inorganic carbon uptake into chloroplasts. This Populus alba (White poplar) protein is Potassium/proton antiporter CemA.